We begin with the raw amino-acid sequence, 77 residues long: uncharacterized protein (77 aa).

The region spanning 11 to 65 (FARLRREKGLTQEEVEARSGFSQQYLSSLERGRRNPTVITLYELAQALGVSHVEL) is the HTH cro/C1-type domain. The segment at residues 22–41 (QEEVEARSGFSQQYLSSLER) is a DNA-binding region (H-T-H motif).

This is an uncharacterized protein from Sinorhizobium fredii (strain NBRC 101917 / NGR234).